Here is a 578-residue protein sequence, read N- to C-terminus: 65-kDa microtubule-associated protein 2 (578 aa).

Coiled coils occupy residues 64–84 (AELL…TTAL), 151–184 (DETD…VLEF), 235–257 (TLKE…LTDL), 290–312 (ALAL…LKSS), and 461–489 (AMLD…QQEQ). Basic and acidic residues predominate over residues 473–494 (REDEKRRLKEQKKQQEQPHTDQ). The tract at residues 473-578 (REDEKRRLKE…SRADPVMASP (106 aa)) is disordered. Residues Ser503 and Ser532 each carry the phosphoserine modification. Positions 549–558 (KIASPSNIVA) are enriched in polar residues. Phosphoserine occurs at positions 566, 569, and 577.

It belongs to the MAP65/ASE1 family. Forms a dimer. Binds to microtubules (MT). Bundles polymerized MT via the formation of 25-nm crossbridges with centrally located endocytic MT.

The protein localises to the nucleus. Its subcellular location is the cytoplasm. The protein resides in the cytoskeleton. It is found in the spindle pole. It localises to the phragmoplast. Functionally, microtubule-associated protein that stabilize microtubules (MT). Involved in the regulation of MT organization and dynamics. Confers MT resistance to the drug propyzamide and cold conditions. This chain is 65-kDa microtubule-associated protein 2 (MAP65-2), found in Arabidopsis thaliana (Mouse-ear cress).